The sequence spans 125 residues: UPF0389 protein CG9231 (125 aa).

The helical transmembrane segment at 69-88 (IRLANIMIALTAVGCAIMVY) threads the bilayer. An N-linked (GlcNAc...) asparagine glycan is attached at Asn112.

The protein belongs to the UPF0389 family.

Its subcellular location is the membrane. This is UPF0389 protein CG9231 from Drosophila melanogaster (Fruit fly).